Consider the following 129-residue polypeptide: Histone H2B.1 (129 aa).

A compositionally biased stretch (basic and acidic residues) spans 1 to 19 (MAPKAEKKPASKAPAEKKP). The segment at 1–37 (MAPKAEKKPASKAPAEKKPAAKKTASTDSKKRTKTRK) is disordered. An N6-acetyllysine; alternate mark is found at lysine 7 and lysine 8. Glycyl lysine isopeptide (Lys-Gly) (interchain with G-Cter in SUMO); alternate cross-links involve residues lysine 7 and lysine 8. Position 11 is a phosphoserine (serine 11). An N6-acetyllysine modification is found at lysine 12. Lysine 17 carries the N6-acetyllysine; alternate modification. Lysine 17 participates in a covalent cross-link: Glycyl lysine isopeptide (Lys-Gly) (interchain with G-Cter in SUMO); alternate. A Glycyl lysine isopeptide (Lys-Gly) (interchain with G-Cter in SUMO) cross-link involves residue lysine 18. Residue lysine 123 forms a Glycyl lysine isopeptide (Lys-Gly) (interchain with G-Cter in ubiquitin) linkage.

Belongs to the histone H2B family. As to quaternary structure, the nucleosome is a histone octamer containing two molecules each of H2A, H2B, H3 and H4 assembled in one H3-H4 heterotetramer and two H2A-H2B heterodimers. The octamer wraps approximately 147 bp of DNA. Post-translationally, monoubiquitinated by the UBC2-BRE1 complex to form H2BK123ub1. H2BK123ub1 gives a specific tag for epigenetic transcriptional activation and is also prerequisite for H3K4me and H3K79me formation. H2BK123ub1 also modulates the formation of double-strand breaks during meiosis and is a prerequisite for DNA-damage checkpoint activation. Phosphorylated by STE20 to form H2BS10ph during progression through meiotic prophase. May be correlated with chromosome condensation. In terms of processing, acetylated by GCN5 to form H2BK11ac and H2BK16ac. H2BK16ac can also be formed by ESA1. Acetylation of N-terminal lysines and particularly formation of H2BK11acK16ac has a positive effect on transcription. Post-translationally, sumoylation to form H2BK6su or H2BK7su, and probably also H2BK16su or H2BK17su, occurs preferentially near the telomeres and represses gene transcription.

The protein localises to the nucleus. Its subcellular location is the chromosome. Core component of nucleosome. Nucleosomes wrap and compact DNA into chromatin, limiting DNA accessibility to the cellular machineries which require DNA as a template. Histones thereby play a central role in transcription regulation, DNA repair, DNA replication and chromosomal stability. DNA accessibility is regulated via a complex set of post-translational modifications of histones, also called histone code, and nucleosome remodeling. The polypeptide is Histone H2B.1 (HTB1) (Meyerozyma guilliermondii (strain ATCC 6260 / CBS 566 / DSM 6381 / JCM 1539 / NBRC 10279 / NRRL Y-324) (Yeast)).